The primary structure comprises 106 residues: UPF0473 protein LSEI_0788 (106 aa).

This sequence belongs to the UPF0473 family.

The chain is UPF0473 protein LSEI_0788 from Lacticaseibacillus paracasei (strain ATCC 334 / BCRC 17002 / CCUG 31169 / CIP 107868 / KCTC 3260 / NRRL B-441) (Lactobacillus paracasei).